The following is a 767-amino-acid chain: 5-methyltetrahydropteroyltriglutamate--homocysteine methyltransferase (767 aa).

5-methyltetrahydropteroyltri-L-glutamate is bound by residues 17–20 and Lys-117; that span reads RELK. L-homocysteine contacts are provided by residues 441-443 and Glu-494; that span reads IGS. Residues 441–443 and Glu-494 each bind L-methionine; that span reads IGS. 5-methyltetrahydropteroyltri-L-glutamate-binding positions include 525-526 and Trp-571; that span reads RC. Asp-609 provides a ligand contact to L-homocysteine. Asp-609 lines the L-methionine pocket. Glu-615 is a binding site for 5-methyltetrahydropteroyltri-L-glutamate. Zn(2+) contacts are provided by His-652, Cys-654, and Glu-676. The active-site Proton donor is the His-705. Cys-737 contributes to the Zn(2+) binding site.

Belongs to the vitamin-B12 independent methionine synthase family. The cofactor is Zn(2+).

It catalyses the reaction 5-methyltetrahydropteroyltri-L-glutamate + L-homocysteine = tetrahydropteroyltri-L-glutamate + L-methionine. It participates in amino-acid biosynthesis; L-methionine biosynthesis via de novo pathway; L-methionine from L-homocysteine (MetE route): step 1/1. In terms of biological role, catalyzes the transfer of a methyl group from 5-methyltetrahydrofolate to homocysteine resulting in methionine formation. In Bifidobacterium longum subsp. infantis (strain ATCC 15697 / DSM 20088 / JCM 1222 / NCTC 11817 / S12), this protein is 5-methyltetrahydropteroyltriglutamate--homocysteine methyltransferase.